Consider the following 526-residue polypeptide: Vitamin B6 transporter bsu1 (526 aa).

The disordered stretch occupies residues 1–53 (MASKIASLFSPSETASKDQHENVAEDLELGTASSQSDGIHETNSEYDEKKREE). The span at 38-53 (GIHETNSEYDEKKREE) shows a compositional bias: basic and acidic residues. Transmembrane regions (helical) follow at residues 81-101 (WSIVFMFCLMQIYVIWTSNGF), 118-138 (VATLCLSMNILGSGLGPMFLG), 147-167 (KPVYFCSIFVYTVFNISCALP), 173-192 (MIISHFIIGVAGSTALTNVA), 204-224 (AGVPMSLFVWACAGGAIGAPM), 238-257 (WLYYINIIVGGFFLIVILII), 314-330 (LYNFYAYGISYFFLTAI), 349-366 (YLSGFVASTLLFLYQPIQ), 387-407 (FTSALFITLLFPAGMFLFAFT), 413-432 (PWMSPIVGNSMVTVANGHNW), 444-461 (PLLSGSAVAAFTLPSFIG), and 480-501 (WAVATMAFISISIPFIIYTFYF).

The protein belongs to the major facilitator superfamily. CAR1 family.

The protein resides in the membrane. In terms of biological role, thiamine-regulated, high affinity import carrier of pyridoxine, pyridoxal and pyridoxamine. Also imports, but does not export, amiloride and so confers sensitivity. This Schizosaccharomyces pombe (strain 972 / ATCC 24843) (Fission yeast) protein is Vitamin B6 transporter bsu1 (bsu1).